We begin with the raw amino-acid sequence, 220 residues long: Outer membrane protein assembly factor BamD (220 aa).

A signal peptide spans 1-22; sequence MRLKHFKTFLFITMAIIVIGTG. A lipid anchor (N-palmitoyl cysteine) is attached at cysteine 23. Cysteine 23 carries S-diacylglycerol cysteine lipidation.

It belongs to the BamD family. As to quaternary structure, part of the Bam complex.

The protein localises to the cell outer membrane. Functionally, part of the outer membrane protein assembly complex, which is involved in assembly and insertion of beta-barrel proteins into the outer membrane. This chain is Outer membrane protein assembly factor BamD, found in Helicobacter pylori (strain ATCC 700392 / 26695) (Campylobacter pylori).